Reading from the N-terminus, the 336-residue chain is Probable GTPase MT1543 (336 aa).

GTP is bound by residues 67–75 (GVPGVGKST), Asp-209, and 245–247 (SAV).

This sequence belongs to the SIMIBI class G3E GTPase family. ArgK/MeaB subfamily. In terms of assembly, homodimer.

Probable GTPase. May also bind and hydrolyze ATP. May function as chaperone. The sequence is that of Probable GTPase MT1543 from Mycobacterium tuberculosis (strain CDC 1551 / Oshkosh).